A 1734-amino-acid polypeptide reads, in one-letter code: Complement C4-A (1734 aa).

Residues 1 to 19 (MRLLWGLAWVFSFCASSLQ) form the signal peptide. Residues Cys-66 and Cys-95 are joined by a disulfide bond. N-linked (GlcNAc...) asparagine glycosylation occurs at Asn-224. Residues Cys-633 and Cys-667 are joined by a disulfide bond. Positions 674–677 (RQKR) are excised as a propeptide. 3 cysteine pairs are disulfide-bonded: Cys-700-Cys-726, Cys-701-Cys-733, and Cys-714-Cys-734. Residues 700-734 (CCQDGMTKLPMKRTCEQRAARVPQQACREPFLSCC) form the Anaphylatoxin-like domain. N-linked (GlcNAc...) asparagine glycosylation is found at Asn-743 and Asn-859. The isoglutamyl cysteine thioester (Cys-Gln) cross-link spans 1002 to 1005 (CAEQ). 2 N-linked (GlcNAc...) asparagine glycosylation sites follow: Asn-1128 and Asn-1383. Sulfotyrosine is present on Tyr-1409. Residues 1437–1443 (RRSRRRR) constitute a propeptide that is removed on maturation. Disulfide bonds link Cys-1461-Cys-1525, Cys-1573-Cys-1578, Cys-1585-Cys-1663, Cys-1608-Cys-1732, and Cys-1708-Cys-1717. Residues 1585–1732 (CPRLLRSLER…FLMEFSSRGC (148 aa)) enclose the NTR domain.

As to quaternary structure, in absence of complement activation, circulates in blood as a disulfide-linked trimer of an alpha, beta and gamma chain. In terms of assembly, complement C4b is composed of Complement C4b-A, Complement C4 beta and Complement C4 gamma chains that are associated via disulfide bonds. Non-enzymatic component of the C3 convertase, also named C4bC2b, composed of the serine protease complement C2b (C2), as well as complement C4b. Non-enzymatic component of the C5 convertase, also named C4bC2bC3b, composed of the serine protease complement C2b (C2), complement C3b, as well as complement C4b. Prior to secretion, the single-chain precursor is enzymatically cleaved by plasminogen (PLG) to yield non-identical chains alpha, beta and gamma. During activation of the complement systems, the alpha chain is cleaved into C4a and C4b by different proteases depending on the complement pathway: C4b stays linked to the beta and gamma chains, while C4a is released in the plasma. The alpha chain is cleaved by C1S to generate C4a and C4b following activation by the classical complement system. The alpha chain is cleaved to generate C4a and C4b by MASP2 following activation by the lectin complement system. The alpha chain is cleaved by GZMK to generate C4a and C4b following activation by the GZMK complement system. Further degradation of C4b by C1 into the inactive fragments C4c and C4d blocks the generation of C3 convertase. The proteolytic cleavages often are incomplete so that many structural forms can be found in plasma. Post-translationally, upon activation, the internal thioester bond reacts with carbohydrate antigens on the target surface to form amide or ester bonds, leading to covalent association with the surface of pathogens. In terms of processing, complement C4b interacts with complement C3b via a thioester linkage. N- and O-glycosylated. O-glycosylated with a core 1 or possibly core 8 glycan.

It localises to the secreted. Its subcellular location is the synapse. The protein localises to the cell projection. It is found in the axon. The protein resides in the dendrite. It localises to the cell surface. Its activity is regulated as follows. Specifically inhibited by nanobody hC4Nb8, inhibiting the classical complement pathway. Its function is as follows. Precursor of non-enzymatic components of the classical, lectin and GZMK complement pathways, which consist in a cascade of proteins that leads to phagocytosis and breakdown of pathogens and signaling that strengthens the adaptive immune system. Non-enzymatic component of C3 and C5 convertases. Generated following cleavage by complement proteases (C1S, MASP2 or GZMK, depending on the complement pathway), it covalently attaches to the surface of pathogens, where it acts as an opsonin that marks the surface of antigens for removal. It then recruits the serine protease complement C2b to form the C3 and C5 convertases, which cleave and activate C3 and C5, respectively, the next components of the complement pathways. Complement C4b-A isotype is responsible for effective binding to form amide bonds with immune aggregates or protein antigens, while complement C4b-B isotype catalyzes the transacylation of the thioester carbonyl group to form ester bonds with carbohydrate antigens. In terms of biological role, putative humoral mediator released following cleavage by complement proteases (C1S, MASP2 or GZMK, depending on the complement pathway). While it is strongly similar to anaphylatoxins, its role is unclear. Was reported to act as a mediator of local inflammatory process; however these effects were probably due to contamination with C3a and/C5a anaphylatoxins in biological assays. In Mus musculus (Mouse), this protein is Complement C4-A.